Here is a 242-residue protein sequence, read N- to C-terminus: Type III pantothenate kinase (242 aa).

7–14 (DLGNSRFK) is an ATP binding site. Residues Y91 and 98–101 (GVDR) contribute to the substrate site. D100 (proton acceptor) is an active-site residue. Position 121 (T121) interacts with ATP. T171 serves as a coordination point for substrate.

Belongs to the type III pantothenate kinase family. As to quaternary structure, homodimer. Requires NH4(+) as cofactor. It depends on K(+) as a cofactor.

It is found in the cytoplasm. The enzyme catalyses (R)-pantothenate + ATP = (R)-4'-phosphopantothenate + ADP + H(+). The protein operates within cofactor biosynthesis; coenzyme A biosynthesis; CoA from (R)-pantothenate: step 1/5. Functionally, catalyzes the phosphorylation of pantothenate (Pan), the first step in CoA biosynthesis. In Xanthomonas campestris pv. campestris (strain 8004), this protein is Type III pantothenate kinase.